The primary structure comprises 104 residues: PTS system lactose-specific EIIA component (104 aa).

Residues 4 to 102 (EEATLLGFEI…MKHLIELYKR (99 aa)) enclose the PTS EIIA type-3 domain. Residue His-78 is the Tele-phosphohistidine intermediate of the active site. At His-78 the chain carries Phosphohistidine; by HPr. Residue Asp-81 coordinates Mg(2+).

Homotrimer. Requires Mg(2+) as cofactor.

It localises to the cytoplasm. In terms of biological role, the phosphoenolpyruvate-dependent sugar phosphotransferase system (sugar PTS), a major carbohydrate active transport system, catalyzes the phosphorylation of incoming sugar substrates concomitantly with their translocation across the cell membrane. The enzyme II LacEF PTS system is involved in lactose transport. The polypeptide is PTS system lactose-specific EIIA component (Streptococcus mutans serotype c (strain ATCC 700610 / UA159)).